The primary structure comprises 1080 residues: Carbamoyl phosphate synthase large chain (1080 aa).

The tract at residues 1–403 is carboxyphosphate synthetic domain; that stretch reads MPKRTDLKTI…SLQKALRGLE (403 aa). 12 residues coordinate ATP: Arg-129, Arg-169, Gly-175, Gly-176, Glu-208, Val-210, Glu-215, Gly-241, Val-242, His-243, Gln-285, and Glu-299. Residues 133–328 form the ATP-grasp 1 domain; sequence RVAMGEIGLD…IAKVAAKLAV (196 aa). Residues Gln-285, Glu-299, and Asn-301 each contribute to the Mg(2+) site. 3 residues coordinate Mn(2+): Gln-285, Glu-299, and Asn-301. The interval 404–554 is oligomerization domain; it reads TGKIGLDPTG…YSTYEDECEA (151 aa). The interval 555 to 942 is carbamoyl phosphate synthetic domain; sequence LPSNRDKIMI…AFARAQEAGG (388 aa). Residues 679 to 876 form the ATP-grasp 2 domain; the sequence is QQLVDKLGLK…LAKIAARCMA (198 aa). Residues Arg-715, Arg-754, Leu-756, Glu-761, Gly-787, Val-788, His-789, Ser-790, Gln-830, and Glu-847 each coordinate ATP. The Mg(2+) site is built by Gln-830, Glu-847, and Asn-849. Gln-830, Glu-847, and Asn-849 together coordinate Mn(2+). An MGS-like domain is found at 943–1080; sequence IKAPPLGKAF…LQELHKELEA (138 aa). The segment at 943–1080 is allosteric domain; the sequence is IKAPPLGKAF…LQELHKELEA (138 aa).

It belongs to the CarB family. In terms of assembly, composed of two chains; the small (or glutamine) chain promotes the hydrolysis of glutamine to ammonia, which is used by the large (or ammonia) chain to synthesize carbamoyl phosphate. Tetramer of heterodimers (alpha,beta)4. Mg(2+) is required as a cofactor. The cofactor is Mn(2+).

It carries out the reaction hydrogencarbonate + L-glutamine + 2 ATP + H2O = carbamoyl phosphate + L-glutamate + 2 ADP + phosphate + 2 H(+). It catalyses the reaction hydrogencarbonate + NH4(+) + 2 ATP = carbamoyl phosphate + 2 ADP + phosphate + 2 H(+). The protein operates within amino-acid biosynthesis; L-arginine biosynthesis; carbamoyl phosphate from bicarbonate: step 1/1. Its pathway is pyrimidine metabolism; UMP biosynthesis via de novo pathway; (S)-dihydroorotate from bicarbonate: step 1/3. Its function is as follows. Large subunit of the glutamine-dependent carbamoyl phosphate synthetase (CPSase). CPSase catalyzes the formation of carbamoyl phosphate from the ammonia moiety of glutamine, carbonate, and phosphate donated by ATP, constituting the first step of 2 biosynthetic pathways, one leading to arginine and/or urea and the other to pyrimidine nucleotides. The large subunit (synthetase) binds the substrates ammonia (free or transferred from glutamine from the small subunit), hydrogencarbonate and ATP and carries out an ATP-coupled ligase reaction, activating hydrogencarbonate by forming carboxy phosphate which reacts with ammonia to form carbamoyl phosphate. The sequence is that of Carbamoyl phosphate synthase large chain from Xanthomonas campestris pv. campestris (strain ATCC 33913 / DSM 3586 / NCPPB 528 / LMG 568 / P 25).